Here is a 107-residue protein sequence, read N- to C-terminus: Phosphoribosyl-ATP pyrophosphatase (107 aa).

This sequence belongs to the PRA-PH family.

It localises to the cytoplasm. The catalysed reaction is 1-(5-phospho-beta-D-ribosyl)-ATP + H2O = 1-(5-phospho-beta-D-ribosyl)-5'-AMP + diphosphate + H(+). Its pathway is amino-acid biosynthesis; L-histidine biosynthesis; L-histidine from 5-phospho-alpha-D-ribose 1-diphosphate: step 2/9. This chain is Phosphoribosyl-ATP pyrophosphatase (hisE), found in Agrobacterium fabrum (strain C58 / ATCC 33970) (Agrobacterium tumefaciens (strain C58)).